A 70-amino-acid chain; its full sequence is Putative membrane protein insertion efficiency factor (70 aa).

It belongs to the UPF0161 family.

The protein localises to the cell inner membrane. In terms of biological role, could be involved in insertion of integral membrane proteins into the membrane. The sequence is that of Putative membrane protein insertion efficiency factor from Methylobacillus flagellatus (strain ATCC 51484 / DSM 6875 / VKM B-1610 / KT).